Here is a 233-residue protein sequence, read N- to C-terminus: RNA-free ribonuclease P (233 aa).

This sequence belongs to the HARP family.

It carries out the reaction Endonucleolytic cleavage of RNA, removing 5'-extranucleotides from tRNA precursor.. Its function is as follows. RNA-free RNase P that catalyzes the removal of the 5'-leader sequence from pre-tRNA to produce the mature 5'-terminus. The polypeptide is RNA-free ribonuclease P (Methanocaldococcus jannaschii (strain ATCC 43067 / DSM 2661 / JAL-1 / JCM 10045 / NBRC 100440) (Methanococcus jannaschii)).